We begin with the raw amino-acid sequence, 271 residues long: Glutamate racemase (271 aa).

Substrate-binding positions include 10–11 (DS) and 42–43 (YG). Cys73 serves as the catalytic Proton donor/acceptor. 74-75 (NT) is a binding site for substrate. The active-site Proton donor/acceptor is Cys183. Residue 184 to 185 (TH) participates in substrate binding.

It belongs to the aspartate/glutamate racemases family.

The catalysed reaction is L-glutamate = D-glutamate. Its pathway is cell wall biogenesis; peptidoglycan biosynthesis. In terms of biological role, provides the (R)-glutamate required for cell wall biosynthesis. This Lactococcus lactis subsp. lactis (strain IL1403) (Streptococcus lactis) protein is Glutamate racemase.